The sequence spans 199 residues: Recombination protein RecR (199 aa).

A C4-type zinc finger spans residues 58-73 (CSVCFTLSDTPVCAIC). The 96-residue stretch at 81–176 (SLLCVVEGPT…TVTRIASGMP (96 aa)) folds into the Toprim domain.

The protein belongs to the RecR family.

Its function is as follows. May play a role in DNA repair. It seems to be involved in an RecBC-independent recombinational process of DNA repair. It may act with RecF and RecO. The sequence is that of Recombination protein RecR from Desulfosudis oleivorans (strain DSM 6200 / JCM 39069 / Hxd3) (Desulfococcus oleovorans).